The primary structure comprises 717 residues: Catalase-peroxidase (717 aa).

A signal peptide spans M1–G12. The segment at residues W93–Y221 is a cross-link (tryptophyl-tyrosyl-methioninium (Trp-Tyr) (with M-247)). Catalysis depends on H94, which acts as the Proton acceptor. Residues Y221–M247 constitute a cross-link (tryptophyl-tyrosyl-methioninium (Tyr-Met) (with W-93)). H262 provides a ligand contact to heme b.

Belongs to the peroxidase family. Peroxidase/catalase subfamily. In terms of assembly, homodimer or homotetramer. Requires heme b as cofactor. In terms of processing, formation of the three residue Trp-Tyr-Met cross-link is important for the catalase, but not the peroxidase activity of the enzyme.

The catalysed reaction is H2O2 + AH2 = A + 2 H2O. It carries out the reaction 2 H2O2 = O2 + 2 H2O. Functionally, bifunctional enzyme with both catalase and broad-spectrum peroxidase activity. The polypeptide is Catalase-peroxidase (Polynucleobacter asymbioticus (strain DSM 18221 / CIP 109841 / QLW-P1DMWA-1) (Polynucleobacter necessarius subsp. asymbioticus)).